A 388-amino-acid polypeptide reads, in one-letter code: Calcium-binding and spermatid-specific protein 1 (388 aa).

The segment at 1-20 (MAEDGLPKIYSHPPAESTKT) is disordered. Phosphothreonine; by CK2 is present on T280. S312 and S344 each carry phosphoserine.

The protein resides in the cytoplasm. Its subcellular location is the mitochondrion inner membrane. It localises to the cell projection. The protein localises to the cilium. It is found in the flagellum. The protein resides in the cytoplasmic vesicle. Its subcellular location is the secretory vesicle. It localises to the acrosome. Calcium-binding protein. Essential for maintaining the structural integrity of the sperm flagella. The polypeptide is Calcium-binding and spermatid-specific protein 1 (CABS1) (Bos taurus (Bovine)).